The following is a 71-amino-acid chain: Vitellogenin-B1 (71 aa).

Positions 1 to 15 (MRGIILAQLLALAGS) are cleaved as a signal peptide. The Vitellogenin domain maps to 24-71 (FSESKPYVYNYEGIILNGIPENGLARSGIKLNCKAEISGYAQRSYMLK).

Produced by the liver, secreted into the blood and then sequestered by receptor mediated endocytosis into growing oocytes, where it is generally cleaved, giving rise to the respective yolk components.

Its function is as follows. Precursor of the major egg-yolk proteins that are sources of nutrients during early development of oviparous organisms. This is Vitellogenin-B1 from Xenopus laevis (African clawed frog).